The chain runs to 729 residues: Fatty acid oxidation complex subunit alpha (729 aa).

The enoyl-CoA hydratase/isomerase stretch occupies residues 1–189 (MLYKGDTLYL…KIGLVDGVVK (189 aa)). Asp-296 serves as a coordination point for substrate. The segment at 311 to 729 (ETPKQAAVLG…ARPVGDLKTA (419 aa)) is 3-hydroxyacyl-CoA dehydrogenase. Residues Met-324, Asp-343, 400–402 (VVE), Lys-407, and Ser-429 each bind NAD(+). The active-site For 3-hydroxyacyl-CoA dehydrogenase activity is His-450. Asn-453 serves as a coordination point for NAD(+). Substrate is bound by residues Asn-500 and Tyr-660. The segment at 708 to 729 (RHNEPYYPPVEPARPVGDLKTA) is disordered.

This sequence in the N-terminal section; belongs to the enoyl-CoA hydratase/isomerase family. It in the C-terminal section; belongs to the 3-hydroxyacyl-CoA dehydrogenase family. As to quaternary structure, heterotetramer of two alpha chains (FadB) and two beta chains (FadA).

The enzyme catalyses a (3S)-3-hydroxyacyl-CoA + NAD(+) = a 3-oxoacyl-CoA + NADH + H(+). It catalyses the reaction a (3S)-3-hydroxyacyl-CoA = a (2E)-enoyl-CoA + H2O. It carries out the reaction a 4-saturated-(3S)-3-hydroxyacyl-CoA = a (3E)-enoyl-CoA + H2O. The catalysed reaction is (3S)-3-hydroxybutanoyl-CoA = (3R)-3-hydroxybutanoyl-CoA. The enzyme catalyses a (3Z)-enoyl-CoA = a 4-saturated (2E)-enoyl-CoA. It catalyses the reaction a (3E)-enoyl-CoA = a 4-saturated (2E)-enoyl-CoA. It functions in the pathway lipid metabolism; fatty acid beta-oxidation. Involved in the aerobic and anaerobic degradation of long-chain fatty acids via beta-oxidation cycle. Catalyzes the formation of 3-oxoacyl-CoA from enoyl-CoA via L-3-hydroxyacyl-CoA. It can also use D-3-hydroxyacyl-CoA and cis-3-enoyl-CoA as substrate. The sequence is that of Fatty acid oxidation complex subunit alpha from Escherichia coli O81 (strain ED1a).